A 644-amino-acid polypeptide reads, in one-letter code: MEAVVNSDVFLTSNAGLKSSYTNQTLSLVDEDHIHTSDKSLSCSVCNSLSQIVDDDFISAGARNQRTKPKRTGNDQSQQPIKKDCMVSIDEVASTHDWSTRLRNDGNAIAKYLTTNKYDTSNFTIQDMLNIMNKLNIVRTNRNELFQLLSHVKSTLNNASVSVKCTHPLVLIHSRASPRIGDQLKELDKIYSPSNHHILLSTTRFQSMHFTDMSSSQDLSFIYRKPETNYYIHPILMALFGIKLPALENAYVHGDTYSLIQQLYEFRRVKSYNYMLLVNRLTEDNPIVITGVSDLISTEIQRANIHTMIRKAIMNIRMGIFYCNDDDAVDPHLMKIIHTGCSQVMTDEEQILASILSIVGFRPTLVSVARPMNGISYDMKLQAAPYIVVNPMKMITTSDSPISINSKDIYSMAFDGNSGRVVFAPPNIGYGRCSGVTHIDPLGTNVMGSAVHSPVIVNGAMMFYVERRQNKNMFGGECYTGFRSLIDDTPIDVSPEIMLNGIMYRLKSAVCYKLGDQFFDCGSSDIFLKGHYTILFTENGPWMYDPLSVFNPGARNARLMRALKNQYKKLSMDSDDGFYEWLNGDGSVFAASKQQMLMNHVANFDDDLLTMEEAMSMISRHCCILIYAQDYDQYISARHITELF.

A propeptide spanning residues 1-61 is cleaved from the precursor; it reads MEAVVNSDVF…IVDDDFISAG (61 aa). The tract at residues 60-81 is disordered; sequence AGARNQRTKPKRTGNDQSQQPI.

This sequence belongs to the orthopoxvirus OPG129 family. In terms of processing, the 73-kDa precursor is cleaved to a mature protein of 60 kDa during virion maturation. Proteolytic cleavage of major core proteins OPG129, OPG136, and OPG098, which occurs at a late stage of core formation, is required for production of infectious mature virions (MV).

It is found in the virion. Its function is as follows. Major component of the virion core that undergoes proteolytic processing during the immature virion (IV) to mature virion (MV) transition. Essential for the formation of a structurally normal core. This Monkeypox virus protein is Major core protein OPG129 (OPG129).